Here is a 576-residue protein sequence, read N- to C-terminus: Alpha-1,3-arabinosyltransferase XAT3 (576 aa).

Residues 1 to 19 (MKAGERPKLVRGVRQESRR) are Cytoplasmic-facing. Residues 20-40 (FRLLVIVVGFFLVSLTFVFVS) form a helical; Signal-anchor for type II membrane protein membrane-spanning segment. The Lumenal portion of the chain corresponds to 41 to 576 (KPDAILFSLN…LLEALDNLNP (536 aa)). The tract at residues 64 to 171 (IQQKVNEPSG…KHKVTLPTVS (108 aa)) is disordered. Basic and acidic residues-rich tracts occupy residues 73 to 98 (GESR…DAKP), 126 to 138 (THNK…KSHQ), and 147 to 163 (GESK…EQKH). Residues N172, N375, and N443 are each glycosylated (N-linked (GlcNAc...) asparagine).

Belongs to the glycosyltransferase 61 family.

The protein localises to the golgi apparatus membrane. The protein operates within glycan metabolism. Functionally, glycosyltransferase involved in the arabinosylation of xylan, the major hemicellulose (non-cellulosic component) of primary and secondary walls of angiosperms. Possesses alpha-1,3-arabinosyltransferase activity, transferring an arabinofuranose residue to the xylan backbone. In Oryza sativa subsp. japonica (Rice), this protein is Alpha-1,3-arabinosyltransferase XAT3.